We begin with the raw amino-acid sequence, 374 residues long: Cell division protein DivIB (374 aa).

Positions 1–90 (MWKISNENDI…EEEHFADRLP (90 aa)) are disordered. The Cytoplasmic segment spans residues 1-103 (MWKISNENDI…KTRNKRLYRR (103 aa)). Positions 39-53 (YLKKQAEEAASKGEN) are enriched in basic and acidic residues. Positions 56 to 75 (AEVTITLQEQSQEEPQQHLP) are enriched in polar residues. Residues 104–124 (LAFILTCLGTAILVALYFVSP) traverse the membrane as a helical segment. Residues 125-374 (LSRLSEVTVS…GENQEVQQAE (250 aa)) lie on the Extracellular side of the membrane. Positions 126–197 (SRLSEVTVSG…NSFKIDIQEY (72 aa)) constitute a POTRA domain. The disordered stretch occupies residues 325 to 374 (KESEETGSEVSEDSAVENQEVVDPNAGVATDEANNGTPTNGENQEVQQAE). A compositionally biased stretch (acidic residues) spans 326–339 (ESEETGSEVSEDSA). Polar residues predominate over residues 356 to 374 (EANNGTPTNGENQEVQQAE).

Belongs to the FtsQ/DivIB family. DivIB subfamily.

It localises to the cell membrane. Cell division protein that may be involved in stabilizing or promoting the assembly of the division complex. In Enterococcus faecalis (strain ATCC 700802 / V583), this protein is Cell division protein DivIB.